Consider the following 90-residue polypeptide: Small ribosomal subunit protein uS15c (90 aa).

Belongs to the universal ribosomal protein uS15 family. Part of the 30S ribosomal subunit.

It is found in the plastid. Its subcellular location is the chloroplast. The protein is Small ribosomal subunit protein uS15c (rps15) of Nandina domestica (Heavenly bamboo).